A 117-amino-acid polypeptide reads, in one-letter code: Large ribosomal subunit protein bL20 (117 aa).

This sequence belongs to the bacterial ribosomal protein bL20 family.

Functionally, binds directly to 23S ribosomal RNA and is necessary for the in vitro assembly process of the 50S ribosomal subunit. It is not involved in the protein synthesizing functions of that subunit. The chain is Large ribosomal subunit protein bL20 from Wigglesworthia glossinidia brevipalpis.